The chain runs to 698 residues: MSFLKLTKSIQKINNFNNNKINLINKYFSTTNINNSGGGGNIKLNDGRIFKFEDKQTPLTIANKINKTIGKQSILSRLNGNKLISMKEIIEMSGKDYNIEFLNFEEHSDARICFWNSSSLVLARATMEYFKNENKEIELINFGHLVNPQTADNINQGTFYIDIFFKDKNQTIKDNDINKIKKIMEYIVKRNDKFEILKNDQQDQDQDQEESFIKFGEFKFKNNFLTIDSSNSIVSLDLIKNSSVVGPNKEYSELQRIVGISFPSKDQMNNWVEIQKIAALRDHRVIGKDQELFFFHPFSPGSCFFLPHGTKIYNKLLQFLRLEYRKRGYQEVISPNIYNQKLWETSGHWDNYKDNMFSFECDHTQYSLKPMNCPGHCLMYAHRARSYKELPMRIADFGVLHRNETHGSLSGLTRVRRFQQDDAHIFCTPDMIREEIKQCLDFMKYVYTIFNFTFHLELSTRPDSYLGELSVWEKAETSLSQVLTEFCGDKWTINHGDGAFYGPKIDIHLKDANGKNHQCATIQLDFQLPIRFNLEYSGGLNNNNNNNNNNEEINDNNNNNSLNRPVMIHRALFGSVERMMAILMEHTAGKWPFWLSPRQCIVIPVSNKFNQFAQEIQSKINLAGYDVDVDLNDSKLLSKKIREATVSQYNYIIVVGQEEIDTNILNVRKRDLPEDNKQVKLSLNDLFSEFKLNIEQFK.

The region spanning 38 to 100 (GGGNIKLNDG…EMSGKDYNIE (63 aa)) is the TGS domain. The interval 541–560 (NNNNNNNNNNEEINDNNNNN) is disordered.

The protein belongs to the class-II aminoacyl-tRNA synthetase family.

The protein localises to the cytoplasm. It catalyses the reaction tRNA(Thr) + L-threonine + ATP = L-threonyl-tRNA(Thr) + AMP + diphosphate + H(+). The chain is Probable threonine--tRNA ligase 2, cytoplasmic (thrS2) from Dictyostelium discoideum (Social amoeba).